A 44-amino-acid chain; its full sequence is AMDKSAKAPQITIFDHRGCSRAPKSETGGTATKDDQMMVKVSQV.

The disordered stretch occupies residues 1–44 (AMDKSAKAPQITIFDHRGCSRAPKSETGGTATKDDQMMVKVSQV). Lysine 4 carries the post-translational modification 5-hydroxylysine. The 15,16-dihydrobiliverdin site is built by cysteine 19 and arginine 21. The 15,16-dihydrobiliverdin chromophore stretch occupies residues 24–26 (KSE). Residue lysine 40 coordinates 15,16-dihydrobiliverdin.

The protein belongs to the phycoerythrin family. Heterotetramer of 2 different alpha chains and 2 identical beta chains. The subunit composition could comprise of any combination of 2 out of 4 different alpha units with an invariant beta unit. Contains one covalently linked 15,16-dihydrobiliverdin chromophore.

The protein localises to the plastid. It is found in the chloroplast thylakoid membrane. Its function is as follows. Light-harvesting photosynthetic tetrapyrrole chromophore-protein from the phycobiliprotein complex. This Rhodomonas sp. (strain CS 24) (Chroomonas sp. (strain CS24)) protein is Phycoerythrin alpha-1 chain (cpeA1).